The sequence spans 473 residues: Ribosomal RNA small subunit methyltransferase F (473 aa).

S-adenosyl-L-methionine-binding positions include 124-130 (ASAPGSK), Glu-148, Asp-175, and Asp-193. Cys-246 functions as the Nucleophile in the catalytic mechanism.

This sequence belongs to the class I-like SAM-binding methyltransferase superfamily. RsmB/NOP family.

It localises to the cytoplasm. It catalyses the reaction cytidine(1407) in 16S rRNA + S-adenosyl-L-methionine = 5-methylcytidine(1407) in 16S rRNA + S-adenosyl-L-homocysteine + H(+). Its function is as follows. Specifically methylates the cytosine at position 1407 (m5C1407) of 16S rRNA. This is Ribosomal RNA small subunit methyltransferase F from Aliivibrio salmonicida (strain LFI1238) (Vibrio salmonicida (strain LFI1238)).